A 23-amino-acid chain; its full sequence is Alpha-amanitin proprotein (23 aa).

The residue at position 1 (Ile-1) is a (3R,4R)-4,5-dihydroxyisoleucine; in form alpha-amanitin. Ile-1 bears the (3R,4S)-4-hydroxyisoleucine; in form gamma-amanitin mark. The segment at residues 1–8 is a cross-link (cyclopeptide (Ile-Pro)); that stretch reads IWGIGCNP. Positions 2 to 6 form a cross-link, 2'-cysteinyl-6'-hydroxytryptophan sulfoxide (Trp-Cys); the sequence is WGIGC. Residue Pro-8 is modified to 4-hydroxyproline. Residues 9–23 constitute a propeptide that is removed on maturation; sequence CVGDEVTALITRGEA.

Belongs to the MSDIN fungal toxin family. In terms of processing, processed by the macrocyclase-peptidase enzyme POPB to yield a toxic cyclic decapeptide. POPB first removes 10 residues from the N-terminus. Conformational trapping of the remaining peptide forces the enzyme to release this intermediate rather than proceed to macrocyclization. The enzyme rebinds the remaining peptide in a different conformation and catalyzes macrocyclization of the N-terminal 8 residues.

Its function is as follows. Major toxin belonging to the bicyclic octapeptides amatoxins that acts by binding non-competitively to RNA polymerase II and greatly slowing the elongation of transcripts from target promoters. This chain is Alpha-amanitin proprotein, found in Amanita fuligineoides.